The primary structure comprises 632 residues: Sodium- and chloride-dependent GABA transporter 3 (632 aa).

The tract at residues 1-41 (MTAEKALPLGNGKAAEEARESEAPGGGCSSGGAAPARHPRV) is disordered. At 1 to 58 (MTAEKALPLGNGKAAEEARESEAPGGGCSSGGAAPARHPRVKRDKAVHERGHWNNKVE) the chain is on the cytoplasmic side. At serine 21 the chain carries Phosphoserine. The next 3 membrane-spanning stretches (helical) occupy residues 59–79 (FVLS…FPYL), 87–106 (AFLI…VFFL), and 131–151 (GIGY…IIIL). Residues 152 to 225 (AWAIFYLSNC…DGIEHIGNLR (74 aa)) lie on the Extracellular side of the membrane. N-linked (GlcNAc...) asparagine glycans are attached at residues asparagine 187, asparagine 190, and asparagine 198. 9 helical membrane-spanning segments follow: residues 226–244 (WELA…FCIW), 253–270 (VVYV…ILLI), 306–323 (IFFS…LGSY), 335–356 (IMLC…FSVL), 389–408 (MPLS…FLGL), 438–456 (LLIL…VMLT), 473–493 (GMCL…VYGS), 514–533 (WCWM…FFLI), and 553–571 (IGWL…WICI). Over 572–632 (TVWKTEGTLP…AAITEKETHF (61 aa)) the chain is Cytoplasmic.

It belongs to the sodium:neurotransmitter symporter (SNF) (TC 2.A.22) family. SLC6A11 subfamily. As to expression, widespread distribution in the brain.

It is found in the cell membrane. It catalyses the reaction 4-aminobutanoate(out) + chloride(out) + 2 Na(+)(out) = 4-aminobutanoate(in) + chloride(in) + 2 Na(+)(in). The enzyme catalyses taurine(out) + chloride(out) + 2 Na(+)(out) = taurine(in) + chloride(in) + 2 Na(+)(in). It carries out the reaction beta-alanine(out) + chloride(out) + 2 Na(+)(out) = beta-alanine(in) + chloride(in) + 2 Na(+)(in). The catalysed reaction is hypotaurine(out) + chloride(out) + 2 Na(+)(out) = hypotaurine(in) + chloride(in) + 2 Na(+)(in). GABA transport is inhibited by SNAP-5114. Its function is as follows. Mediates sodium- and chloride-dependent transport of gamma-aminobutyric acid (GABA). Can also mediate transport of beta-alanine and to a lower extent that of taurine and hypotaurine. The chain is Sodium- and chloride-dependent GABA transporter 3 (SLC6A11) from Homo sapiens (Human).